The chain runs to 483 residues: Cobyric acid synthase (483 aa).

Residues 248-435 (LLKVVVPVLP…LHGLFETPAA (188 aa)) form the GATase cobBQ-type domain. The active-site Nucleophile is the C329. H427 is an active-site residue.

It belongs to the CobB/CobQ family. CobQ subfamily.

It functions in the pathway cofactor biosynthesis; adenosylcobalamin biosynthesis. Its function is as follows. Catalyzes amidations at positions B, D, E, and G on adenosylcobyrinic A,C-diamide. NH(2) groups are provided by glutamine, and one molecule of ATP is hydrogenolyzed for each amidation. This Pseudomonas fluorescens (strain ATCC BAA-477 / NRRL B-23932 / Pf-5) protein is Cobyric acid synthase.